Reading from the N-terminus, the 328-residue chain is Ornithine carbamoyltransferase, catabolic (328 aa).

Carbamoyl phosphate is bound by residues 56 to 59, Q83, R107, and 134 to 137; these read STRT and HPTQ. Residues N166, D230, and 234 to 235 contribute to the L-ornithine site; that span reads SM. Carbamoyl phosphate is bound by residues 270 to 271 and R315; that span reads CL.

It belongs to the aspartate/ornithine carbamoyltransferase superfamily. OTCase family.

Its subcellular location is the cytoplasm. It catalyses the reaction carbamoyl phosphate + L-ornithine = L-citrulline + phosphate + H(+). The protein operates within amino-acid degradation; L-arginine degradation via ADI pathway; carbamoyl phosphate from L-arginine: step 2/2. Functionally, reversibly catalyzes the transfer of the carbamoyl group from carbamoyl phosphate (CP) to the N(epsilon) atom of ornithine (ORN) to produce L-citrulline. This Borreliella afzelii (Borrelia afzelii) protein is Ornithine carbamoyltransferase, catabolic (arcB).